We begin with the raw amino-acid sequence, 311 residues long: Nod factor export ATP-binding protein I (311 aa).

The region spanning 13 to 243 (IDLAGVSKSY…QIGCPVIEIY (231 aa)) is the ABC transporter domain. 45–52 (GPNGAGKS) lines the ATP pocket.

It belongs to the ABC transporter superfamily. Lipooligosaccharide exporter (TC 3.A.1.102) family. In terms of assembly, the complex is composed of two ATP-binding proteins (NodI) and two transmembrane proteins (NodJ).

The protein resides in the cell inner membrane. Part of the ABC transporter complex NodIJ involved in the export of the nodulation factors (Nod factors), the bacterial signal molecules that induce symbiosis and subsequent nodulation induction. Nod factors are LCO (lipo-chitin oligosaccharide), a modified beta-1,4-linked N-acetylglucosamine oligosaccharide. This subunit is responsible for energy coupling to the transport system. In Rhizobium johnstonii (strain DSM 114642 / LMG 32736 / 3841) (Rhizobium leguminosarum bv. viciae), this protein is Nod factor export ATP-binding protein I.